The chain runs to 71 residues: Small ribosomal subunit protein bS18c (71 aa).

Belongs to the bacterial ribosomal protein bS18 family. Part of the 30S ribosomal subunit.

The protein resides in the plastid. Its subcellular location is the chloroplast. In Mesostigma viride (Green alga), this protein is Small ribosomal subunit protein bS18c (rps18).